A 395-amino-acid polypeptide reads, in one-letter code: Glutamate N-acetyltransferase (395 aa).

Thr146, Lys169, Thr180, Glu263, Asn390, and Thr395 together coordinate substrate. Thr180 (nucleophile) is an active-site residue.

The protein belongs to the ArgJ family. As to quaternary structure, heterotetramer of two alpha and two beta chains.

Its subcellular location is the cytoplasm. The enzyme catalyses N(2)-acetyl-L-ornithine + L-glutamate = N-acetyl-L-glutamate + L-ornithine. It participates in amino-acid biosynthesis; L-arginine biosynthesis; L-ornithine and N-acetyl-L-glutamate from L-glutamate and N(2)-acetyl-L-ornithine (cyclic): step 1/1. In terms of biological role, catalyzes the transfer of the acetyl group from N(2)-acetylornithine to glutamate, forming N-acetylglutamate and L-ornithine. This chain is Glutamate N-acetyltransferase, found in Methanosarcina acetivorans (strain ATCC 35395 / DSM 2834 / JCM 12185 / C2A).